The primary structure comprises 146 residues: Allograft inflammatory factor 1 (146 aa).

Position 1 is an N-acetylserine (serine 1). Lysine 10 bears the N6-acetyllysine mark. Serine 38 carries the phosphoserine modification. Residues 44 to 79 (RKLEAFKQKYMEFDLNGNGDIDIMSLKRMLEKLGVP) form the EF-hand 1 domain. Ca(2+)-binding residues include aspartate 57, asparagine 59, asparagine 61, aspartate 63, and threonine 99. Residues 81-115 (THLELKKLIKEVSSGSGETFSYSIFLKMMLGKRSA) enclose the EF-hand 2; degenerate domain. The segment at 127 to 146 (AREQEKPTGPPAKKAISELP) is disordered.

Homodimer (Potential). Monomer. Interacts with LCP1. In terms of tissue distribution, microglial cells in the central nervous system and dendritic cells and macrophages in several organs.

The protein resides in the cytoplasm. The protein localises to the cytoskeleton. Its subcellular location is the cell projection. It localises to the ruffle membrane. It is found in the phagocytic cup. Its function is as follows. Actin-binding protein that enhances membrane ruffling and RAC activation. Enhances the actin-bundling activity of LCP1. Binds calcium. Plays a role in RAC signaling and in phagocytosis. May play a role in macrophage activation and function. Promotes the proliferation of vascular smooth muscle cells and of T-lymphocytes. Enhances lymphocyte migration. Plays a role in vascular inflammation. Has a dual influence on glucose-induced insulin secretion: inhibition at low concentration and stimulation at high concentrations. The polypeptide is Allograft inflammatory factor 1 (AIF1) (Sus scrofa (Pig)).